A 441-amino-acid polypeptide reads, in one-letter code: COBRA-like protein 2 (441 aa).

Residues 1–28 (MNILFSRFSFLLLFLCSWTSFTFTTTEA) form the signal peptide. Asn37, Asn162, Asn170, Asn209, Asn234, Asn249, Asn314, Asn329, and Asn348 each carry an N-linked (GlcNAc...) asparagine glycan. Asn417 carries GPI-anchor amidated asparagine lipidation. A propeptide spans 418 to 441 (ASPNIATSPFVILLITFLSVLILM) (removed in mature form).

The protein belongs to the COBRA family. In terms of tissue distribution, expressed in roots, stems, leaves, flowers and siliques.

The protein localises to the cell membrane. The polypeptide is COBRA-like protein 2 (COBL2) (Arabidopsis thaliana (Mouse-ear cress)).